A 348-amino-acid polypeptide reads, in one-letter code: Tripartite motif-containing protein 16-like protein (348 aa).

A B30.2/SPRY domain is found at 139–337; it reads YWTSKPEPST…RIVDLGEEPE (199 aa).

Belongs to the TRIM/RBCC family.

Its subcellular location is the cytoplasm. The chain is Tripartite motif-containing protein 16-like protein (TRIM16L) from Homo sapiens (Human).